Here is a 504-residue protein sequence, read N- to C-terminus: Maturase K (504 aa).

It belongs to the intron maturase 2 family. MatK subfamily.

The protein localises to the plastid. It localises to the chloroplast. In terms of biological role, usually encoded in the trnK tRNA gene intron. Probably assists in splicing its own and other chloroplast group II introns. This chain is Maturase K, found in Quercus lyrata (Overcup oak).